Here is a 112-residue protein sequence, read N- to C-terminus: uncharacterized protein (112 aa).

N-linked (GlcNAc...) asparagine; by host glycosylation is found at Asn-29 and Asn-60. Residues Ile-66–Leu-86 form a helical membrane-spanning segment.

This sequence belongs to the asfivirus B117L family.

The protein resides in the host membrane. The protein localises to the virion. This is an uncharacterized protein from African swine fever virus (isolate Tick/South Africa/Pretoriuskop Pr4/1996) (ASFV).